Consider the following 153-residue polypeptide: D-aminoacyl-tRNA deacylase (153 aa).

Positions 137–138 match the Gly-cisPro motif, important for rejection of L-amino acids motif; that stretch reads GP.

It belongs to the DTD family. Homodimer.

The protein localises to the cytoplasm. The enzyme catalyses glycyl-tRNA(Ala) + H2O = tRNA(Ala) + glycine + H(+). The catalysed reaction is a D-aminoacyl-tRNA + H2O = a tRNA + a D-alpha-amino acid + H(+). An aminoacyl-tRNA editing enzyme that deacylates mischarged D-aminoacyl-tRNAs. Also deacylates mischarged glycyl-tRNA(Ala), protecting cells against glycine mischarging by AlaRS. Acts via tRNA-based rather than protein-based catalysis; rejects L-amino acids rather than detecting D-amino acids in the active site. By recycling D-aminoacyl-tRNA to D-amino acids and free tRNA molecules, this enzyme counteracts the toxicity associated with the formation of D-aminoacyl-tRNA entities in vivo and helps enforce protein L-homochirality. This chain is D-aminoacyl-tRNA deacylase, found in Methylococcus capsulatus (strain ATCC 33009 / NCIMB 11132 / Bath).